The chain runs to 177 residues: Probable inosine/xanthosine triphosphatase (177 aa).

Belongs to the YjjX NTPase family. As to quaternary structure, homodimer. It depends on Mg(2+) as a cofactor. The cofactor is Mn(2+).

The catalysed reaction is XTP + H2O = XDP + phosphate + H(+). It catalyses the reaction ITP + H2O = IDP + phosphate + H(+). Functionally, phosphatase that hydrolyzes non-canonical purine nucleotides such as XTP and ITP to their respective diphosphate derivatives. Probably excludes non-canonical purines from DNA/RNA precursor pool, thus preventing their incorporation into DNA/RNA and avoiding chromosomal lesions. The polypeptide is Probable inosine/xanthosine triphosphatase (Pyrobaculum arsenaticum (strain DSM 13514 / JCM 11321 / PZ6)).